The following is a 170-amino-acid chain: MSTLRIPIALQQAVMQCLRHYLQLANQHLGTAYPEPKINYHQRGTNAGSAYLQSFEIRLNPVLLLENKQPFIDEVVPHELAHLLVYRQFDRVAPHGKEWRWMMEQVLKVPASRTHQFEVASVRSKTFNYQCKCQQHALTIRRHNKVLRGESEYRCRQCGEKLQFITINPD.

The 144-residue stretch at 22 to 165 (LQLANQHLGT…RQCGEKLQFI (144 aa)) folds into the SprT-like domain. His78 lines the Zn(2+) pocket. Glu79 is an active-site residue. Residue His82 coordinates Zn(2+).

Belongs to the SprT family. It depends on Zn(2+) as a cofactor.

It is found in the cytoplasm. This chain is Protein SprT, found in Yersinia pseudotuberculosis serotype IB (strain PB1/+).